Here is a 375-residue protein sequence, read N- to C-terminus: 23S rRNA (uracil(747)-C(5))-methyltransferase RlmC (375 aa).

[4Fe-4S] cluster contacts are provided by C3, C11, C14, and C87. S-adenosyl-L-methionine contacts are provided by Q212, F241, E262, and N307. The active-site Nucleophile is C334.

It belongs to the class I-like SAM-binding methyltransferase superfamily. RNA M5U methyltransferase family. RlmC subfamily.

It carries out the reaction uridine(747) in 23S rRNA + S-adenosyl-L-methionine = 5-methyluridine(747) in 23S rRNA + S-adenosyl-L-homocysteine + H(+). In terms of biological role, catalyzes the formation of 5-methyl-uridine at position 747 (m5U747) in 23S rRNA. This Salmonella enteritidis PT4 (strain P125109) protein is 23S rRNA (uracil(747)-C(5))-methyltransferase RlmC.